The following is a 490-amino-acid chain: Myocilin (490 aa).

A signal peptide spans 1-18 (MPATQLLLLACLVWGLGA). The N-linked (GlcNAc...) asparagine glycan is linked to N43. Positions 52–169 (QAMSAIQDLQ…SQEVARLRRG (118 aa)) form a coiled coil. Positions 146-157 (REENEDLARRLD) are enriched in basic and acidic residues. Positions 146–188 (REENEDLARRLDSSSQEVARLRRGQCPQARGTPQDVPSGSREV) are disordered. The Olfactomedin-like domain occupies 230–489 (GCGELVWVGE…MVTYDLRLSE (260 aa)). A disulfide bridge links C231 with C419. Positions 366, 414, 415, 463, and 464 each coordinate Ca(2+). The Microbody targeting signal motif lies at 488–490 (SEM).

Homodimer (via N-terminus). Can also form higher oligomers. Interacts with OLFM3, FN1, NRCAM, GLDN and NFASC. Interacts (via N-terminus) with MYL2. Interacts with SFRP1, FRZB, FZD7, FZD10, FZD1 and WIF1; regulates Wnt signaling. Interacts with SNTA1; regulates muscle hypertrophy. Interacts with ERBB2 and ERBB3; activates ERBB2-ERBB3 signaling pathway. Interacts with SNCG; affects its secretion and its aggregation. Post-translationally, palmitoylated. In terms of processing, undergoes a calcium-dependent proteolytic cleavage at Arg-212 by CAPN2 in the endoplasmic reticulum. The result is the production of two fragments, one of 35 kDa containing the C-terminal olfactomedin-like domain, and another of 20 kDa containing the N-terminal leucine zipper-like domain. Glycosylated. As to expression, expressed in optic nerve head, ciliary body and retina.

The protein resides in the secreted. It is found in the golgi apparatus. Its subcellular location is the cytoplasmic vesicle. It localises to the extracellular space. The protein localises to the extracellular matrix. The protein resides in the extracellular exosome. It is found in the mitochondrion. Its subcellular location is the mitochondrion intermembrane space. It localises to the mitochondrion inner membrane. The protein localises to the mitochondrion outer membrane. The protein resides in the rough endoplasmic reticulum. It is found in the cell projection. Its subcellular location is the cilium. It localises to the endoplasmic reticulum. Its function is as follows. Secreted glycoprotein regulating the activation of different signaling pathways in adjacent cells to control different processes including cell adhesion, cell-matrix adhesion, cytoskeleton organization and cell migration. Promotes substrate adhesion, spreading and formation of focal contacts. Negatively regulates cell-matrix adhesion and stress fiber assembly through Rho protein signal transduction. Modulates the organization of actin cytoskeleton by stimulating the formation of stress fibers through interactions with components of Wnt signaling pathways. Promotes cell migration through activation of PTK2 and the downstream phosphatidylinositol 3-kinase signaling. Plays a role in bone formation and promotes osteoblast differentiation in a dose-dependent manner through mitogen-activated protein kinase signaling. Mediates myelination in the peripheral nervous system through ERBB2/ERBB3 signaling. Plays a role as a regulator of muscle hypertrophy through the components of dystrophin-associated protein complex. Involved in positive regulation of mitochondrial depolarization. Plays a role in neurite outgrowth. May participate in the obstruction of fluid outflow in the trabecular meshwork. This is Myocilin (MYOC) from Felis catus (Cat).